Reading from the N-terminus, the 691-residue chain is MNNNFSSMIDRYKHQQLQIGSVSPQQISAWATKILPNGEIVGEVKKPYTFLYKTNKPEKEGLFCERIFGPIKSGICACGNYRVIGDEKEEQKFCEQCGVEFVDSRIRRYRMGCIKLACPVTHVWYLKRLPSYIANILDKPLKELEGLVYCDFSFARPITNKPTFLRLRGLLKYEIQSWKSSIPLFFTTQGFDTFRNREISTGAGAIREQLADLDLRILLENSLLEWKDLGEEENTGNEWEDRKAGRRKGFLVRRMELVKHFIRTNIEPKWMVLCLLPVLPPELRPIIQIDGGKLMSSDINELYRRVIYRNNTLTDLLTTSRSTPGELVMCQEKLVQEAVDTLLDNGIRGQPMRDGHNKVYKSFSDIIEGKEGRFRETLLGKRVDYSGRSVIVVGPSLSLHQCGLPREIAIELFQPFVIRDLIKQHLASNIGVAKSKIREKEPIIWEILQDVMQGHPVLLNRAPTLHRLGIQAFQPVLVEGRVICLHPLVCKGFNADFDGDQMAVHVPLSLEAQAEARLLMFSHMNLLSPAIGDPISVPTQDMLIGLYVLTSEKHRGICTNRYTNCNIRTLQTKSSDYSNSKYKNPYNNGPFFCNSYDAIGAYRQKRINLESPLWLRWRLDRRVITSRETPIEVHYESRGTYFEIYGHFLIVRSLKKKILFIYLRTTVGHISLYREIEEAIQGFSRAWSSDT.

Zn(2+)-binding residues include Cys76, Cys78, Cys94, and Cys97. Asp496, Asp498, and Asp500 together coordinate Mg(2+).

This sequence belongs to the RNA polymerase beta' chain family. RpoC1 subfamily. Requires Mg(2+) as cofactor. The cofactor is Zn(2+).

It is found in the plastid. It carries out the reaction RNA(n) + a ribonucleoside 5'-triphosphate = RNA(n+1) + diphosphate. DNA-dependent RNA polymerase catalyzes the transcription of DNA into RNA using the four ribonucleoside triphosphates as substrates. The protein is DNA-directed RNA polymerase subunit beta' of Cuscuta exaltata (Tall dodder).